A 193-amino-acid chain; its full sequence is MAKNAKFRVPFRRRREGKTDFRQRLGLLLSGKPRLVARKSLNNVIAQLMAYDEKGDVVLVSAHSRELVKMGYKGHCGNLPAAYLTGLLLGKKAVKEGAEEAILDKGLHRATKGAAIFAVLKGALDAGMDIPHGDEIIADEERLNGTHVKNYAESLKEDADAYKKQFSKYLEKGLNPEDLPEHVEELKEKILNL.

The protein belongs to the universal ribosomal protein uL18 family. Part of the 50S ribosomal subunit. Contacts the 5S and 23S rRNAs.

Its function is as follows. This is one of the proteins that bind and probably mediate the attachment of the 5S RNA into the large ribosomal subunit, where it forms part of the central protuberance. This is Large ribosomal subunit protein uL18 from Methanococcus maripaludis (strain C6 / ATCC BAA-1332).